A 396-amino-acid polypeptide reads, in one-letter code: MQTRAPWSLPEATLAYFPNARFVSSDRDLGAGAAPGIAASRSTACQTWGGITVADPGSGPTGFGHVPVLAQRCFELLTPALTRYYPDGSQAVLLDATIGAGGHAERFLEGLPGLRLIGLDRDPTALDVARSRLVRFADRLTLVHTRYDCLGAALAESGYAAVGSVDGILFDLGVSSMQLDRAERGFAYATDAPLDMRMDPTTPLTAADIVNTYDEAALADILRRYGEERFARRIAAGIVRRRAKTPFTSTAELVALLYQAIPAPARRVGGHPAKRTFQALRIAVNDELESLRTAVPAALDALAIGGRIAVLAYQSLEDRIVKRVFAEAVASATPAGLPVELPGHEPRFRSLTHGAERASVAEIERNPRSTPVRLRALQRVEHRAQSQQWATEKGDS.

Residues 101–103 (GGH), aspartate 120, tyrosine 147, aspartate 171, and glutamine 178 contribute to the S-adenosyl-L-methionine site.

It belongs to the methyltransferase superfamily. RsmH family.

Its subcellular location is the cytoplasm. It carries out the reaction cytidine(1402) in 16S rRNA + S-adenosyl-L-methionine = N(4)-methylcytidine(1402) in 16S rRNA + S-adenosyl-L-homocysteine + H(+). In terms of biological role, specifically methylates the N4 position of cytidine in position 1402 (C1402) of 16S rRNA. This Mycobacterium bovis (strain ATCC BAA-935 / AF2122/97) protein is Ribosomal RNA small subunit methyltransferase H.